A 551-amino-acid chain; its full sequence is MKYQELVDVYSALENTTKRLEKTQIISNFLLKLDSTTLEQVGLLILGSIFPAWSDKEIGIGNKLVMQAVGEAVGVTPDKVEDAVRDQGDIGLACISLYAKKSQTTFFSQPLTIDFVFKSLRKLSEKSGARSTKRKIDIILEMLSQASASEAKYLTRTILEELRIGVGEGVVRDAIAQAFNIDKSVVERAMMLTNDLGLIAVVAKEKGEGGLKELNLTPGTPVKPMLAQLAPPIPEIINEMGVAICETKYDGIRLQVHRHSDEIKIFTRRLENITHALPEIVDLFNEYLPHEDYIVEGEVIATRDGNPLSFQNILHRVRRKHNIDEAMEQVPLKVFLFDLLYYIVPMIDEPLLKRRKKLEEIVNTTPDEINLSNMVYGTPDTIKEVEDLFELSIAQHHEGIMIKDAGEPYIPGLRGKKMLKYKAEPETLDMVVVGGTYGIGKRGDFVGSYLVSLRDEDNNLKTVAYVATGLDDATLEYLTKKMKEYELSTKGREIVVEPKIVLEVAFSEIVESPEYETGYSLRFPVVKNIRKDKGVDDIDTVERLISMYETQ.

E246 contributes to the ATP binding site. The N6-AMP-lysine intermediate role is filled by K248. ATP is bound by residues R253, R268, E298, F337, R414, and K420.

This sequence belongs to the ATP-dependent DNA ligase family. The cofactor is Mg(2+).

It catalyses the reaction ATP + (deoxyribonucleotide)n-3'-hydroxyl + 5'-phospho-(deoxyribonucleotide)m = (deoxyribonucleotide)n+m + AMP + diphosphate.. In terms of biological role, DNA ligase that seals nicks in double-stranded DNA during DNA replication, DNA recombination and DNA repair. This chain is DNA ligase, found in Methanobrevibacter smithii (strain ATCC 35061 / DSM 861 / OCM 144 / PS).